The primary structure comprises 162 residues: Protein-export protein SecB (162 aa).

The protein belongs to the SecB family. As to quaternary structure, homotetramer, a dimer of dimers. One homotetramer interacts with 1 SecA dimer.

It localises to the cytoplasm. One of the proteins required for the normal export of preproteins out of the cell cytoplasm. It is a molecular chaperone that binds to a subset of precursor proteins, maintaining them in a translocation-competent state. It also specifically binds to its receptor SecA. The polypeptide is Protein-export protein SecB (Pseudoalteromonas translucida (strain TAC 125)).